Here is a 69-residue protein sequence, read N- to C-terminus: Large ribosomal subunit protein bL31 (69 aa).

4 residues coordinate Zn(2+): Cys17, Cys19, Cys37, and Cys40.

It belongs to the bacterial ribosomal protein bL31 family. Type A subfamily. As to quaternary structure, part of the 50S ribosomal subunit. Requires Zn(2+) as cofactor.

In terms of biological role, binds the 23S rRNA. In Clostridium novyi (strain NT), this protein is Large ribosomal subunit protein bL31.